A 667-amino-acid polypeptide reads, in one-letter code: Probable potassium transport system protein Kup (667 aa).

Helical transmembrane passes span 16–36 (GFIIALGIVYGDIGTSPLYTM), 58–78 (VSLIIWTLTLVTTIKYVLIAL), 101–121 (WLIIPAMLGGATLLSDGALTP), 146–166 (TNVILTTLLILMVLFGLQRFG), 167–187 (TGVIGKLFGPVMLVWFSVLGI), 221–241 (IFILGSIFLATTGAEALYSDL), 253–273 (WPFVKVCIILSYCGQAAWILA), 294–314 (VYLVILATLAAIIASQALISG), 343–363 (LYIPVINWSLFAVTSCTVLYF), 373–393 (YGLAITITMLMTTILLAYYLI), 399–419 (PLLASLLMAFFAFIEFIFFLA), and 424–444 (FMHGGYVVVVLALAIVFVMVI).

It belongs to the HAK/KUP transporter (TC 2.A.72) family.

The protein resides in the cell membrane. It catalyses the reaction K(+)(in) + H(+)(in) = K(+)(out) + H(+)(out). Its function is as follows. Transport of potassium into the cell. Likely operates as a K(+):H(+) symporter. This is Probable potassium transport system protein Kup from Streptococcus equi subsp. equi (strain 4047).